Reading from the N-terminus, the 311-residue chain is Methionyl-tRNA formyltransferase (311 aa).

109-112 (SLLP) is a (6S)-5,6,7,8-tetrahydrofolate binding site.

Belongs to the Fmt family.

It carries out the reaction L-methionyl-tRNA(fMet) + (6R)-10-formyltetrahydrofolate = N-formyl-L-methionyl-tRNA(fMet) + (6S)-5,6,7,8-tetrahydrofolate + H(+). Attaches a formyl group to the free amino group of methionyl-tRNA(fMet). The formyl group appears to play a dual role in the initiator identity of N-formylmethionyl-tRNA by promoting its recognition by IF2 and preventing the misappropriation of this tRNA by the elongation apparatus. The chain is Methionyl-tRNA formyltransferase from Staphylococcus aureus (strain JH1).